Consider the following 698-residue polypeptide: Elongation factor G (698 aa).

The 276-residue stretch at 10-285 folds into the tr-type G domain; it reads AATRNIGIMA…AVVDFLPSPT (276 aa). Residues 19–26, 83–87, and 137–140 each bind GTP; these read AHIDAGKT, DTPGH, and NKMD.

It belongs to the TRAFAC class translation factor GTPase superfamily. Classic translation factor GTPase family. EF-G/EF-2 subfamily.

It localises to the cytoplasm. Functionally, catalyzes the GTP-dependent ribosomal translocation step during translation elongation. During this step, the ribosome changes from the pre-translocational (PRE) to the post-translocational (POST) state as the newly formed A-site-bound peptidyl-tRNA and P-site-bound deacylated tRNA move to the P and E sites, respectively. Catalyzes the coordinated movement of the two tRNA molecules, the mRNA and conformational changes in the ribosome. The sequence is that of Elongation factor G from Parafrankia sp. (strain EAN1pec).